A 61-amino-acid chain; its full sequence is [Val1,Thr6]-bradykinyl-Gln,Ser (61 aa).

Residues 1-22 (MSILKKSLFLVLFLGLVSFSIC) form the signal peptide. Residues 23-50 (EEEKREAEEEENEDEIEEQSEEKKRFEP) constitute a propeptide that is removed on maturation. The interval 25-61 (EKREAEEEENEDEIEEQSEEKKRFEPVPPGFTPFRQS) is disordered. Over residues 30 to 42 (EEEENEDEIEEQS) the composition is skewed to acidic residues. Residue Pro52 is modified to 4-hydroxyproline; in form [Val1,Hyp2,Thr6]-Bradykinyl-Gln,Ser and [Val1,Hyp2,Thr6]-Bradykinin.

It belongs to the frog skin active peptide (FSAP) family. Bradykinin-related peptide subfamily. In terms of tissue distribution, expressed by the skin glands.

It is found in the secreted. Induces contraction of rat ileum smooth muscle (EC(50)=2.73 uM) but has no activity towards smooth muscle from tail artery, urinary bladder or uterus up to concentrations of 100 uM. Binds to both bradykinin receptor B1 (BDKRB1) and B2 (BDKRB2); the effect via BDKRB1 is stronger. In terms of biological role, [Val1,Hyp2,Thr6]-bradykinin-Gln,Ser: Induces contraction of rat ileum smooth muscle (EC(50)=710 nM) but has no activity towards smooth muscle from tail artery, urinary bladder or uterus up to concentrations of 100 uM. Binds to both bradykinin receptor B1 (BDKRB1) and B2 (BDKRB2); the effect via BDKRB1 is stronger. Induces contraction of guinea pig ileum smooth muscle. In Pithecopus hypochondrialis (Orange-legged leaf frog), this protein is [Val1,Thr6]-bradykinyl-Gln,Ser.